A 149-amino-acid chain; its full sequence is Ribosome maturation factor RimP (149 aa).

This sequence belongs to the RimP family.

The protein localises to the cytoplasm. Its function is as follows. Required for maturation of 30S ribosomal subunits. In Neisseria gonorrhoeae (strain NCCP11945), this protein is Ribosome maturation factor RimP.